The sequence spans 441 residues: NADH-quinone oxidoreductase subunit D 1 (441 aa).

Belongs to the complex I 49 kDa subunit family. NDH-1 is composed of 14 different subunits. Subunits NuoB, C, D, E, F, and G constitute the peripheral sector of the complex.

The protein resides in the cell membrane. The catalysed reaction is a quinone + NADH + 5 H(+)(in) = a quinol + NAD(+) + 4 H(+)(out). NDH-1 shuttles electrons from NADH, via FMN and iron-sulfur (Fe-S) centers, to quinones in the respiratory chain. The immediate electron acceptor for the enzyme in this species is believed to be a menaquinone. Couples the redox reaction to proton translocation (for every two electrons transferred, four hydrogen ions are translocated across the cytoplasmic membrane), and thus conserves the redox energy in a proton gradient. The sequence is that of NADH-quinone oxidoreductase subunit D 1 from Salinispora arenicola (strain CNS-205).